A 283-amino-acid chain; its full sequence is MRTQWPSPAKLNLFLYITGQRADGYHTLQTLFQFLDYGDTISIELRDDGDIRLLTPVEGVEHEDNLIVRAARLLMKTAADSGRLSTGSGANISIDKRLPMGGGLGGGSSNAATVLVALNHLWQCGLSMDELAEMGLTLGADVPVFVRGHAAFAEGVGEIFTPVDPPEKWYLVAHPGVSIPTPVIFKDPELPRNTPKRSIETLLKCEFSNDCEVIARKRFREVDVVLSWLLEYAPSRLTGTGACVFAEFDTESEARQVLEQAPEWLNGFVARGVNLSPLHRAML.

Residue Lys-10 is part of the active site. 99-109 (PMGGGLGGGSS) contributes to the ATP binding site. Asp-141 is a catalytic residue.

Belongs to the GHMP kinase family. IspE subfamily. As to quaternary structure, homodimer.

The enzyme catalyses 4-CDP-2-C-methyl-D-erythritol + ATP = 4-CDP-2-C-methyl-D-erythritol 2-phosphate + ADP + H(+). It participates in isoprenoid biosynthesis; isopentenyl diphosphate biosynthesis via DXP pathway; isopentenyl diphosphate from 1-deoxy-D-xylulose 5-phosphate: step 3/6. In terms of biological role, catalyzes the phosphorylation of the position 2 hydroxy group of 4-diphosphocytidyl-2C-methyl-D-erythritol. The chain is 4-diphosphocytidyl-2-C-methyl-D-erythritol kinase from Escherichia coli O127:H6 (strain E2348/69 / EPEC).